We begin with the raw amino-acid sequence, 179 residues long: Adenine phosphoribosyltransferase (179 aa).

It belongs to the purine/pyrimidine phosphoribosyltransferase family. In terms of assembly, homodimer.

Its subcellular location is the cytoplasm. It catalyses the reaction AMP + diphosphate = 5-phospho-alpha-D-ribose 1-diphosphate + adenine. Its pathway is purine metabolism; AMP biosynthesis via salvage pathway; AMP from adenine: step 1/1. In terms of biological role, catalyzes a salvage reaction resulting in the formation of AMP, that is energically less costly than de novo synthesis. The chain is Adenine phosphoribosyltransferase from Jannaschia sp. (strain CCS1).